A 352-amino-acid chain; its full sequence is Phenylalanine--tRNA ligase alpha subunit (352 aa).

A Mg(2+)-binding site is contributed by glutamate 258.

The protein belongs to the class-II aminoacyl-tRNA synthetase family. Phe-tRNA synthetase alpha subunit type 1 subfamily. As to quaternary structure, tetramer of two alpha and two beta subunits. Mg(2+) is required as a cofactor.

It is found in the cytoplasm. It carries out the reaction tRNA(Phe) + L-phenylalanine + ATP = L-phenylalanyl-tRNA(Phe) + AMP + diphosphate + H(+). This Staphylococcus epidermidis (strain ATCC 35984 / DSM 28319 / BCRC 17069 / CCUG 31568 / BM 3577 / RP62A) protein is Phenylalanine--tRNA ligase alpha subunit.